Reading from the N-terminus, the 883-residue chain is Valine--tRNA ligase (883 aa).

The short motif at 50-60 is the 'HIGH' region element; that stretch reads PNVTGKLHMGH. The 'KMSKS' region signature appears at 527 to 531; sequence KMSKS. K530 contributes to the ATP binding site. Positions 811 to 883 form a coiled coil; the sequence is LNELIDLDEE…KQRLEQLQRA (73 aa). The disordered stretch occupies residues 859 to 883; that stretch reads QRTKRSDFEDQLTSTKQRLEQLQRA.

This sequence belongs to the class-I aminoacyl-tRNA synthetase family. ValS type 1 subfamily. Monomer.

The protein localises to the cytoplasm. It catalyses the reaction tRNA(Val) + L-valine + ATP = L-valyl-tRNA(Val) + AMP + diphosphate. Functionally, catalyzes the attachment of valine to tRNA(Val). As ValRS can inadvertently accommodate and process structurally similar amino acids such as threonine, to avoid such errors, it has a 'posttransfer' editing activity that hydrolyzes mischarged Thr-tRNA(Val) in a tRNA-dependent manner. The chain is Valine--tRNA ligase from Lacticaseibacillus casei (Lactobacillus casei).